The primary structure comprises 750 residues: Tyrosine-protein phosphatase 2 (750 aa).

Residues 1 to 20 (MDRIAQQYRNGKRDNNGNRM) form a disordered region. S258 is modified (phosphoserine). Disordered stretches follow at residues 327–348 (LHQKQLSQKQRGPQSTDDSKLY) and 425–450 (VKLPHSPKPPAVSEASTTETKTDKSY). Positions 330-348 (KQLSQKQRGPQSTDDSKLY) are enriched in polar residues. The 355-residue stretch at 383–737 (SPSPLSSDDT…IACYEALLNY (355 aa)) folds into the Tyrosine-protein phosphatase domain. The residue at position 430 (S430) is a Phosphoserine. The active-site Phosphocysteine intermediate is the C666.

This sequence belongs to the protein-tyrosine phosphatase family. Non-receptor class subfamily. Interacts with HOG1.

It is found in the cytoplasm. It localises to the nucleus. It catalyses the reaction O-phospho-L-tyrosyl-[protein] + H2O = L-tyrosyl-[protein] + phosphate. In terms of biological role, major phosphatase responsible with PTP3 for tyrosine dephosphorylation of MAP kinase HOG1 to inactivate its activity. May also be involved in the regulation of MAP kinase FUS3. May be implicated in the ubiquitin-mediated protein degradation. This Saccharomyces cerevisiae (strain ATCC 204508 / S288c) (Baker's yeast) protein is Tyrosine-protein phosphatase 2 (PTP2).